Reading from the N-terminus, the 213-residue chain is MOB kinase activator-like 1 homolog A (213 aa).

4 residues coordinate Zn(2+): Cys77, Cys82, His159, and His164.

The protein belongs to the MOB1/phocein family.

In Dictyostelium discoideum (Social amoeba), this protein is MOB kinase activator-like 1 homolog A (mobA).